An 803-amino-acid polypeptide reads, in one-letter code: Bromodomain-containing protein 2 (803 aa).

The residue at position 1 (Met-1) is an N-acetylmethionine. Thr-6 carries the phosphothreonine modification. Residue Ser-37 is modified to Phosphoserine. Positions 53–73 are disordered; sequence ALQLTPANPPPPEVSNPKKPG. The Bromo 1 domain maps to 74–180; it reads RVTNQLQYLH…KIFLQKVASM (107 aa). A protein is bound by residues Asp-112, Tyr-155, Asn-156, Lys-157, Asp-160, and Asp-161. Disordered stretches follow at residues 268–348, 456–652, and 739–803; these read PPAQ…KLSE, EPLE…KRQL, and EKRL…SDSG. The span at 285–298 shows a compositional bias: low complexity; the sequence is TTTPTPTAILAPGS. Phosphoserine is present on residues Ser-298 and Ser-301. Positions 316-332 are enriched in basic and acidic residues; it reads VRRESGRPIKPPRKDLP. Positions 344 to 453 constitute a Bromo 2 domain; the sequence is GKLSEQLKHC…DVFEFRYAKM (110 aa). Residues 481–515 show a composition bias toward acidic residues; the sequence is SSEESSSESSSEEEEEEDEDEEEEEEESESSDSEE. The segment covering 545–567 has biased composition (basic residues); sequence KPKRKREKKEKKKKRKAEKHRGR. A Nuclear localization signal motif is present at residues 556–560; it reads KKKRK. Residues 623 to 632 are compositionally biased toward low complexity; sequence KTAPPALPAG. Positions 634–716 constitute an NET domain; it reads DSEEEEESRP…SCLRKKPRKP (83 aa). Ser-635 bears the Phosphoserine mark. The segment covering 641–652 has biased composition (basic and acidic residues); sequence SRPMSYDEKRQL. A compositionally biased stretch (low complexity) spans 777–797; it reads SASSSSSDSSSSSSSSSSSDT.

The protein belongs to the BET family. In terms of assembly, homodimer. Interacts with E2F1. Interacts with (acetylated) STAT3; promoting STAT3 recruitment to chromatin. Interacts with CTCF; promoting BRD2 recruitment to chromatin.

It localises to the nucleus. It is found in the chromosome. Chromatin reader protein that specifically recognizes and binds histone H4 acetylated at 'Lys-5' and 'Lys-12' (H4K5ac and H4K12ac, respectively), thereby controlling gene expression and remodeling chromatin structures. Recruits transcription factors and coactivators to target gene sites, and activates RNA polymerase II machinery for transcriptional elongation. Plays a key role in genome compartmentalization via its association with CTCF and cohesin: recruited to chromatin by CTCF and promotes formation of topologically associating domains (TADs) via its ability to bind acetylated histones, contributing to CTCF boundary formation and enhancer insulation. Also recognizes and binds acetylated non-histone proteins, such as STAT3. Involved in inflammatory response by regulating differentiation of naive CD4(+) T-cells into T-helper Th17: recognizes and binds STAT3 acetylated at 'Lys-87', promoting STAT3 recruitment to chromatin. In addition to acetylated lysines, also recognizes and binds lysine residues on histones that are both methylated and acetylated on the same side chain to form N6-acetyl-N6-methyllysine (Kacme), an epigenetic mark of active chromatin associated with increased transcriptional initiation. Specifically binds histone H4 acetyl-methylated at 'Lys-5' and 'Lys-12' (H4K5acme and H4K12acme, respectively). This is Bromodomain-containing protein 2 (BRD2) from Bos taurus (Bovine).